The primary structure comprises 137 residues: Fluoride-specific ion channel FluC 1 (137 aa).

Helical transmembrane passes span 4–24, 37–57, 62–82, and 100–120; these read LIYIIVGIAGILGALSRYYLG, LATLLINLVGCFLLAWLTTYI, ILPAEIITGIGTGFIGSFTTF, and IAFLYVSCSILGGLIMSGLGY. Na(+) is bound by residues Gly-77 and Thr-80.

Belongs to the fluoride channel Fluc/FEX (TC 1.A.43) family.

It localises to the cell membrane. It carries out the reaction fluoride(in) = fluoride(out). With respect to regulation, na(+) is not transported, but it plays an essential structural role and its presence is essential for fluoride channel function. Functionally, fluoride-specific ion channel. Important for reducing fluoride concentration in the cell, thus reducing its toxicity. The sequence is that of Fluoride-specific ion channel FluC 1 from Bacillus cereus (strain ATCC 10987 / NRS 248).